A 188-amino-acid polypeptide reads, in one-letter code: Protein GrpE (188 aa).

The tract at residues 1-24 (MSDENKPGEAAELDAGVAPEAQPE) is disordered.

Belongs to the GrpE family. As to quaternary structure, homodimer.

The protein resides in the cytoplasm. Functionally, participates actively in the response to hyperosmotic and heat shock by preventing the aggregation of stress-denatured proteins, in association with DnaK and GrpE. It is the nucleotide exchange factor for DnaK and may function as a thermosensor. Unfolded proteins bind initially to DnaJ; upon interaction with the DnaJ-bound protein, DnaK hydrolyzes its bound ATP, resulting in the formation of a stable complex. GrpE releases ADP from DnaK; ATP binding to DnaK triggers the release of the substrate protein, thus completing the reaction cycle. Several rounds of ATP-dependent interactions between DnaJ, DnaK and GrpE are required for fully efficient folding. This chain is Protein GrpE, found in Hyphomonas neptunium (strain ATCC 15444).